Here is a 202-residue protein sequence, read N- to C-terminus: 7-methyl-GTP pyrophosphatase (202 aa).

D70 serves as the catalytic Proton acceptor.

Belongs to the Maf family. YceF subfamily. It depends on a divalent metal cation as a cofactor.

The protein localises to the cytoplasm. The catalysed reaction is N(7)-methyl-GTP + H2O = N(7)-methyl-GMP + diphosphate + H(+). In terms of biological role, nucleoside triphosphate pyrophosphatase that hydrolyzes 7-methyl-GTP (m(7)GTP). May have a dual role in cell division arrest and in preventing the incorporation of modified nucleotides into cellular nucleic acids. This is 7-methyl-GTP pyrophosphatase from Pseudoalteromonas translucida (strain TAC 125).